A 498-amino-acid chain; its full sequence is Probable dipeptidase B (498 aa).

The active site involves Cys26.

The protein belongs to the peptidase C69 family.

The enzyme catalyses an L-aminoacyl-L-amino acid + H2O = 2 an L-alpha-amino acid. This Streptococcus pyogenes serotype M1 protein is Probable dipeptidase B (pepDB).